Here is a 603-residue protein sequence, read N- to C-terminus: Aspartate--tRNA(Asp/Asn) ligase (603 aa).

Glutamate 172 contacts L-aspartate. Residues 196–199 (QLFK) form an aspartate region. Position 218 (arginine 218) interacts with L-aspartate. Residues 218–220 (RDE) and glutamine 227 each bind ATP. Histidine 457 is a binding site for L-aspartate. Glutamate 491 contacts ATP. Arginine 498 lines the L-aspartate pocket. 543–546 (GLDR) contacts ATP.

Belongs to the class-II aminoacyl-tRNA synthetase family. Type 1 subfamily. In terms of assembly, homodimer.

It localises to the cytoplasm. The enzyme catalyses tRNA(Asx) + L-aspartate + ATP = L-aspartyl-tRNA(Asx) + AMP + diphosphate. Its function is as follows. Aspartyl-tRNA synthetase with relaxed tRNA specificity since it is able to aspartylate not only its cognate tRNA(Asp) but also tRNA(Asn). Reaction proceeds in two steps: L-aspartate is first activated by ATP to form Asp-AMP and then transferred to the acceptor end of tRNA(Asp/Asn). This is Aspartate--tRNA(Asp/Asn) ligase from Laribacter hongkongensis (strain HLHK9).